Here is an 887-residue protein sequence, read N- to C-terminus: Integrator complex subunit 6 (887 aa).

The 225-residue stretch at 3 to 227 (ILLFLIDTSA…QCLESLVQKV (225 aa)) folds into the VWFA domain. An Inhibitory loop motif is present at residues 626 to 633 (MMIDEADE). Position 804 is a phosphoserine (Ser804).

It belongs to the Integrator subunit 6 family. Component of the Integrator complex, composed of core subunits INTS1, INTS2, INTS3, INTS4, INTS5, INTS6, INTS7, INTS8, INTS9/RC74, INTS10, INTS11/CPSF3L, INTS12, INTS13, INTS14 and INTS15. The core complex associates with protein phosphatase 2A subunits PPP2CA and PPP2R1A, to form the Integrator-PP2A (INTAC) complex. Widely expressed. Expressed in heart, brain, placenta, lung, liver, skeletal muscle, kidney and pancreas.

It localises to the nucleus. It is found in the chromosome. Functionally, component of the integrator complex, a multiprotein complex that terminates RNA polymerase II (Pol II) transcription in the promoter-proximal region of genes. The integrator complex provides a quality checkpoint during transcription elongation by driving premature transcription termination of transcripts that are unfavorably configured for transcriptional elongation: the complex terminates transcription by (1) catalyzing dephosphorylation of the C-terminal domain (CTD) of Pol II subunit POLR2A and SUPT5H/SPT5, (2) degrading the exiting nascent RNA transcript via endonuclease activity and (3) promoting the release of Pol II from bound DNA. The integrator complex is also involved in terminating the synthesis of non-coding Pol II transcripts, such as enhancer RNAs (eRNAs), small nuclear RNAs (snRNAs), telomerase RNAs and long non-coding RNAs (lncRNAs). Within the integrator complex, INTS6 acts as a molecular adapter that promotes assembly of protein phosphatase 2A (PP2A) subunits to the integrator core complex, promoting recruitment of PP2A to transcription pause-release checkpoint. Mediates recruitment of cytoplasmic dynein to the nuclear envelope, probably as component of the integrator complex. May have a tumor suppressor role; an ectopic expression suppressing tumor cell growth. The polypeptide is Integrator complex subunit 6 (Homo sapiens (Human)).